We begin with the raw amino-acid sequence, 217 residues long: uncharacterized protein (217 aa).

Positions 2 to 216 constitute an ABC transporter domain; that stretch reads LCVKNVSLRL…AQWSENYNKL (215 aa). 34 to 41 is an ATP binding site; that stretch reads GPSGCGKS.

Belongs to the ABC transporter superfamily.

Probably part of a binding-protein-dependent transport system YnjCD. Probably responsible for energy coupling to the transport system. This is an uncharacterized protein from Escherichia coli (strain K12).